Here is a 250-residue protein sequence, read N- to C-terminus: Probable transcriptional regulatory protein SYNAS_07390 (250 aa).

This sequence belongs to the TACO1 family.

It is found in the cytoplasm. This Syntrophus aciditrophicus (strain SB) protein is Probable transcriptional regulatory protein SYNAS_07390.